The following is a 429-amino-acid chain: DNA primase DnaG (429 aa).

A Toprim domain is found at 172-246 (DSIIVVEGRN…DVDFIARAPP (75 aa)). Mg(2+)-binding residues include Glu178, Asp220, and Asp222. The segment at 287–322 (RNTKELEERQGNELKNERPEKINENEESEKNVELKE) is disordered.

It belongs to the archaeal DnaG primase family. Forms a ternary complex with MCM helicase and DNA. Component of the archaeal exosome complex. It depends on Mg(2+) as a cofactor.

It carries out the reaction ssDNA + n NTP = ssDNA/pppN(pN)n-1 hybrid + (n-1) diphosphate.. In terms of biological role, RNA polymerase that catalyzes the synthesis of short RNA molecules used as primers for DNA polymerase during DNA replication. Also part of the exosome, which is a complex involved in RNA degradation. Acts as a poly(A)-binding protein that enhances the interaction between heteromeric, adenine-rich transcripts and the exosome. This chain is DNA primase DnaG, found in Picrophilus torridus (strain ATCC 700027 / DSM 9790 / JCM 10055 / NBRC 100828 / KAW 2/3).